We begin with the raw amino-acid sequence, 138 residues long: Acidic phospholipase A2 VP7 (138 aa).

The N-terminal stretch at 1-16 (MRTLWIVAVCLMGVEG) is a signal peptide. 7 cysteine pairs are disulfide-bonded: cysteine 42-cysteine 131, cysteine 44-cysteine 60, cysteine 59-cysteine 111, cysteine 65-cysteine 138, cysteine 66-cysteine 104, cysteine 73-cysteine 97, and cysteine 91-cysteine 102. Residues tyrosine 43, glycine 45, and glycine 47 each contribute to the Ca(2+) site. Histidine 63 is a catalytic residue. Residue aspartate 64 coordinates Ca(2+). Aspartate 105 is an active-site residue.

The protein belongs to the phospholipase A2 family. Group II subfamily. D49 sub-subfamily. Does not form a complex. Requires Ca(2+) as cofactor. In terms of tissue distribution, expressed by the venom gland.

It localises to the secreted. The catalysed reaction is a 1,2-diacyl-sn-glycero-3-phosphocholine + H2O = a 1-acyl-sn-glycero-3-phosphocholine + a fatty acid + H(+). Snake venom phospholipase A2 (PLA2) that is not toxic by itself, but the synergistical mixture of a basic and this acidic protein is lethal. PLA2 catalyzes the calcium-dependent hydrolysis of the 2-acyl groups in 3-sn-phosphoglycerides. The sequence is that of Acidic phospholipase A2 VP7 from Daboia palaestinae (Palestine viper).